Here is a 126-residue protein sequence, read N- to C-terminus: Phosphoribosyl-AMP cyclohydrolase (126 aa).

A Mg(2+)-binding site is contributed by Asp76. Cys77 is a binding site for Zn(2+). The Mg(2+) site is built by Asp78 and Asp80. Residues Cys94 and Cys101 each coordinate Zn(2+).

Belongs to the PRA-CH family. In terms of assembly, homodimer. Requires Mg(2+) as cofactor. The cofactor is Zn(2+).

The protein resides in the cytoplasm. It carries out the reaction 1-(5-phospho-beta-D-ribosyl)-5'-AMP + H2O = 1-(5-phospho-beta-D-ribosyl)-5-[(5-phospho-beta-D-ribosylamino)methylideneamino]imidazole-4-carboxamide. It functions in the pathway amino-acid biosynthesis; L-histidine biosynthesis; L-histidine from 5-phospho-alpha-D-ribose 1-diphosphate: step 3/9. Its function is as follows. Catalyzes the hydrolysis of the adenine ring of phosphoribosyl-AMP. The polypeptide is Phosphoribosyl-AMP cyclohydrolase (Ruthia magnifica subsp. Calyptogena magnifica).